A 278-amino-acid chain; its full sequence is HTH-type transcriptional activator RhaS (278 aa).

Residues 174 to 272 (NQLMAWLEDH…SWSPREIRQG (99 aa)) form the HTH araC/xylS-type domain. 2 DNA-binding regions (H-T-H motif) span residues 191–212 (ETVA…KQHT) and 239–262 (VTDI…RREF).

In terms of assembly, binds DNA as a dimer.

Its subcellular location is the cytoplasm. Activates expression of the rhaBAD and rhaT operons. The chain is HTH-type transcriptional activator RhaS from Enterobacter sp. (strain 638).